The chain runs to 416 residues: Isobutyryl-CoA dehydrogenase, mitochondrial (416 aa).

A mitochondrion-targeting transit peptide spans 1-21; sequence MISGLFKLSNKQSVLQNATKL. FAD-binding positions include 156–165 and 189–191; these read YCLTEPGSGS and FIS. Residue serine 165 coordinates substrate. 273–276 contacts substrate; sequence NGGR. FAD is bound by residues arginine 301, 311-312, and 370-374; these read FQ and QLFGG. Glutamate 397 serves as the catalytic Proton acceptor. 399–401 contacts FAD; sequence SDA. Arginine 409 is a binding site for substrate.

This sequence belongs to the acyl-CoA dehydrogenase family. Homotetramer. Requires FAD as cofactor.

It localises to the mitochondrion. It carries out the reaction 2-methylpropanoyl-CoA + oxidized [electron-transfer flavoprotein] + H(+) = 2-methylpropenoyl-CoA + reduced [electron-transfer flavoprotein]. The enzyme catalyses (2S)-2-methylbutanoyl-CoA + oxidized [electron-transfer flavoprotein] + H(+) = (2E)-2-methylbut-2-enoyl-CoA + reduced [electron-transfer flavoprotein]. The catalysed reaction is propanoyl-CoA + oxidized [electron-transfer flavoprotein] + H(+) = acryloyl-CoA + reduced [electron-transfer flavoprotein]. The protein operates within amino-acid degradation; L-valine degradation. Isobutyryl-CoA dehydrogenase which catalyzes one of the steps of the valine catabolic pathway. To a lesser extent, is also able to catalyze the oxidation of (2S)-2-methylbutanoyl-CoA. The chain is Isobutyryl-CoA dehydrogenase, mitochondrial (acad8) from Dictyostelium discoideum (Social amoeba).